Consider the following 187-residue polypeptide: UPF0301 protein KPK_0728 (187 aa).

The protein belongs to the UPF0301 (AlgH) family.

The protein is UPF0301 protein KPK_0728 of Klebsiella pneumoniae (strain 342).